A 313-amino-acid polypeptide reads, in one-letter code: Protein FixB (313 aa).

L255–D283 lines the FAD pocket.

Belongs to the ETF alpha-subunit/FixB family. In terms of assembly, heterodimer of FixA and FixB.

It participates in amine and polyamine metabolism; carnitine metabolism. In terms of biological role, required for anaerobic carnitine reduction. May bring reductant to CaiA. The protein is Protein FixB of Escherichia coli O1:K1 / APEC.